Consider the following 259-residue polypeptide: Protein unc-50 homolog (259 aa).

The span at 1–15 (MLPTSSPQIHRNGSL) shows a compositional bias: polar residues. Residues 1-22 (MLPTSSPQIHRNGSLSERDAAR) are disordered. The Cytoplasmic segment spans residues 1–80 (MLPTSSPQIH…TKDQWARDDP (80 aa)). The chain crosses the membrane as a helical span at residues 81-101 (AFLVLLSIWLCVSTVGFGLVL). Over 102-110 (DMGFVETLT) the chain is Lumenal. Residues 111-131 (LLLWVVFIDCIGVGLLISTLM) traverse the membrane as a helical segment. Residues 132 to 162 (WFVTNKYLMKHPNRDYDVEWGYAFDVHLNAF) lie on the Cytoplasmic side of the membrane. The chain crosses the membrane as a helical span at residues 163 to 183 (YPLLVILHFLQLFFINHVVVI). Residues 184-198 (SSDWFLGYFVGNTMW) lie on the Lumenal side of the membrane. A helical transmembrane segment spans residues 199–219 (LIAIGYYVYITFLGYSALPFL). Over 220–222 (KNT) the chain is Cytoplasmic. Residues 223–243 (VVLLYPFALLGLLYVLSISLG) form a helical membrane-spanning segment. At 244-259 (WNFTKGLCWFYKHRVQ) the chain is on the lumenal side.

This sequence belongs to the unc-50 family.

It localises to the nucleus inner membrane. The protein localises to the golgi apparatus membrane. In terms of biological role, involved in the cell surface expression of neuronal nicotinic receptors. Binds RNA. In Danio rerio (Zebrafish), this protein is Protein unc-50 homolog (unc50).